A 253-amino-acid chain; its full sequence is Tetraspanin-3 (253 aa).

Topologically, residues 1–11 (MGQCGITSSKT) are cytoplasmic. The helical transmembrane segment at 12 to 32 (VLVFLNLIFWGAAGILCYVGA) threads the bilayer. Residues 33-50 (YVFITYDDYDHFFEDVYT) are Extracellular-facing. Residues 51–71 (LIPAVVIIAVGALLFIIGLIG) form a helical membrane-spanning segment. Residues 72-85 (CCATIRESRCGLAT) lie on the Cytoplasmic side of the membrane. Residues 86-106 (FVIILLLVFVTEVVVVVLGYV) traverse the membrane as a helical segment. Residues 107 to 212 (YRAKVENEVD…KKLQEIMMHV (106 aa)) are Extracellular-facing. Asn127, Asn152, Asn167, and Asn183 each carry an N-linked (GlcNAc...) asparagine glycan. Residues 213–233 (IWAALAFAAIQLLGMLCACIV) traverse the membrane as a helical segment. Topologically, residues 234-253 (LCRRSRDPAYELLITGGAYA) are cytoplasmic.

It belongs to the tetraspanin (TM4SF) family. As to quaternary structure, interacts with claudin-11/CLDN11 and integrins.

Its subcellular location is the membrane. Functionally, regulates the proliferation and migration of oligodendrocytes, a process essential for normal myelination and repair. This chain is Tetraspanin-3 (TSPAN3), found in Bos taurus (Bovine).